Consider the following 248-residue polypeptide: Ubiquinone/menaquinone biosynthesis C-methyltransferase UbiE (248 aa).

Ser-68 and Asp-92 together coordinate S-adenosyl-L-methionine.

The protein belongs to the class I-like SAM-binding methyltransferase superfamily. MenG/UbiE family.

It catalyses the reaction a 2-demethylmenaquinol + S-adenosyl-L-methionine = a menaquinol + S-adenosyl-L-homocysteine + H(+). It carries out the reaction a 2-methoxy-6-(all-trans-polyprenyl)benzene-1,4-diol + S-adenosyl-L-methionine = a 5-methoxy-2-methyl-3-(all-trans-polyprenyl)benzene-1,4-diol + S-adenosyl-L-homocysteine + H(+). It participates in quinol/quinone metabolism; menaquinone biosynthesis; menaquinol from 1,4-dihydroxy-2-naphthoate: step 2/2. Its pathway is cofactor biosynthesis; ubiquinone biosynthesis. Methyltransferase required for the conversion of demethylmenaquinol (DMKH2) to menaquinol (MKH2) and the conversion of 2-polyprenyl-6-methoxy-1,4-benzoquinol (DDMQH2) to 2-polyprenyl-3-methyl-6-methoxy-1,4-benzoquinol (DMQH2). The chain is Ubiquinone/menaquinone biosynthesis C-methyltransferase UbiE from Rickettsia akari (strain Hartford).